Here is a 303-residue protein sequence, read N- to C-terminus: Putative CRISPR-associated endonuclease Cas1 2 (303 aa).

Glu-149 provides a ligand contact to Mn(2+).

The protein belongs to the CRISPR-associated endonuclease Cas1 family. In terms of assembly, homodimer, forms a heterotetramer with a Cas2 homodimer. Requires Mg(2+) as cofactor. It depends on Mn(2+) as a cofactor.

Functionally, CRISPR (clustered regularly interspaced short palindromic repeat), is an adaptive immune system that provides protection against mobile genetic elements (viruses, transposable elements and conjugative plasmids). CRISPR clusters contain sequences complementary to antecedent mobile elements and target invading nucleic acids. CRISPR clusters are transcribed and processed into CRISPR RNA (crRNA). Acts as a dsDNA endonuclease. Involved in the integration of spacer DNA into the CRISPR cassette. In Methanospirillum hungatei JF-1 (strain ATCC 27890 / DSM 864 / NBRC 100397 / JF-1), this protein is Putative CRISPR-associated endonuclease Cas1 2.